The following is a 62-amino-acid chain: uncharacterized protein (62 aa).

The protein localises to the plastid. It localises to the chloroplast. This is an uncharacterized protein from Chlamydomonas reinhardtii (Chlamydomonas smithii).